Consider the following 247-residue polypeptide: Probable transcriptional regulatory protein LAF_0541 (247 aa).

Positions 1-22 (MSGHSKWHNIQGRKNAQDAKRG) are disordered.

The protein belongs to the TACO1 family.

The protein localises to the cytoplasm. The chain is Probable transcriptional regulatory protein LAF_0541 from Limosilactobacillus fermentum (strain NBRC 3956 / LMG 18251) (Lactobacillus fermentum).